Here is a 157-residue protein sequence, read N- to C-terminus: Holo-[acyl-carrier-protein] synthase (157 aa).

Mg(2+) is bound by residues Asp-8 and Glu-59.

Belongs to the P-Pant transferase superfamily. AcpS family. Requires Mg(2+) as cofactor.

The protein localises to the cytoplasm. The catalysed reaction is apo-[ACP] + CoA = holo-[ACP] + adenosine 3',5'-bisphosphate + H(+). Its function is as follows. Transfers the 4'-phosphopantetheine moiety from coenzyme A to a Ser of acyl-carrier-protein. This chain is Holo-[acyl-carrier-protein] synthase, found in Gluconobacter oxydans (strain 621H) (Gluconobacter suboxydans).